The chain runs to 160 residues: Negative modulator of initiation of replication (160 aa).

The protein belongs to the SeqA family. Homodimer. Polymerizes to form helical filaments.

The protein localises to the cytoplasm. Functionally, negative regulator of replication initiation, which contributes to regulation of DNA replication and ensures that replication initiation occurs exactly once per chromosome per cell cycle. Binds to pairs of hemimethylated GATC sequences in the oriC region, thus preventing assembly of replication proteins and re-initiation at newly replicated origins. Repression is relieved when the region becomes fully methylated. The chain is Negative modulator of initiation of replication from Idiomarina loihiensis (strain ATCC BAA-735 / DSM 15497 / L2-TR).